The sequence spans 371 residues: MVDDSLKDAIAGGAAGLASSLVVAPLDVVKTRKQAQKAFYSTGGGKNTMVLGGTLSSMRTIFHNEGIAGLYRGVGPMMLGYLPSWSIYFVVYEKCKVLFGVNKKYTSLHEIDSSKVGIKASLDSSDKQFYRYWGGQIFSAVIAGAASVTLTNPIWVVKTRLVTQSHPRASSFVDKIAAATTVQFRNLQTDAPSVKWRMPRFWLKRRTNVKSSPSQHPVNPPTGPACSPAYNNTFDAFRKIYKYEGLAAFYRGLFPSLFGTLHVGIQFPLYEYFKSFLDDFFGKKSNFHIVLAATLSKIAASTVTYPHEVLRTRLQSLDAPTHNSATLLIRDIWRSEGWRKYYSGMATNFIRTIPASSVTFLSFEIVRKWLN.

Solcar repeat units follow at residues 3 to 98 (DDSL…CKVL), 131 to 276 (RYWG…FKSF), and 284 to 369 (KSNF…VRKW). The next 6 membrane-spanning stretches (helical) occupy residues 9–29 (AIAGGAAGLASSLVVAPLDVV), 73–93 (GVGPMMLGYLPSWSIYFVVYE), 137–157 (IFSAVIAGAASVTLTNPIWVV), 253–273 (LFPSLFGTLHVGIQFPLYEYF), 290–310 (VLAATLSKIAASTVTYPHEVL), and 341–362 (YYSGMATNFIRTIPASSVTFLS).

The protein belongs to the mitochondrial carrier (TC 2.A.29) family.

It localises to the mitochondrion inner membrane. This is an uncharacterized protein from Schizosaccharomyces pombe (strain 972 / ATCC 24843) (Fission yeast).